Consider the following 591-residue polypeptide: Aspartate--tRNA(Asp/Asn) ligase (591 aa).

Glutamate 175 provides a ligand contact to L-aspartate. An aspartate region spans residues 199-202 (QQFK). Residues arginine 221 and histidine 453 each contribute to the L-aspartate site. An ATP-binding site is contributed by 221 to 223 (RDE). Position 486 (glutamate 486) interacts with ATP. Arginine 493 lines the L-aspartate pocket. Position 538–541 (538–541 (GIDR)) interacts with ATP.

It belongs to the class-II aminoacyl-tRNA synthetase family. Type 1 subfamily. Homodimer.

The protein localises to the cytoplasm. It catalyses the reaction tRNA(Asx) + L-aspartate + ATP = L-aspartyl-tRNA(Asx) + AMP + diphosphate. Aspartyl-tRNA synthetase with relaxed tRNA specificity since it is able to aspartylate not only its cognate tRNA(Asp) but also tRNA(Asn). Reaction proceeds in two steps: L-aspartate is first activated by ATP to form Asp-AMP and then transferred to the acceptor end of tRNA(Asp/Asn). The sequence is that of Aspartate--tRNA(Asp/Asn) ligase from Cereibacter sphaeroides (strain KD131 / KCTC 12085) (Rhodobacter sphaeroides).